The sequence spans 603 residues: Granule-bound starch synthase 1, chloroplastic/amyloplastic (603 aa).

The N-terminal 75 residues, 1-75, are a transit peptide targeting the chloroplast; sequence MATITGSSMP…SEKSLGKIVC (75 aa). K91 is an ADP-alpha-D-glucose binding site.

This sequence belongs to the glycosyltransferase 1 family. Bacterial/plant glycogen synthase subfamily. Expressed in pods and leaves. No expression in flowers or stipules.

It localises to the plastid. Its subcellular location is the chloroplast. The protein resides in the amyloplast. It carries out the reaction an NDP-alpha-D-glucose + [(1-&gt;4)-alpha-D-glucosyl](n) = [(1-&gt;4)-alpha-D-glucosyl](n+1) + a ribonucleoside 5'-diphosphate + H(+). The protein operates within glycan biosynthesis; starch biosynthesis. Its function is as follows. May be responsible for the synthesis of amylose. In Pisum sativum (Garden pea), this protein is Granule-bound starch synthase 1, chloroplastic/amyloplastic.